Here is a 37-residue protein sequence, read N- to C-terminus: Diptericin (37 aa).

The tract at residues 1 to 37 (DLHIPPPDNKINWPQLSGGGGGSPKTGYDININAQQK) is disordered.

The protein belongs to the attacin/sarcotoxin-2 family. In terms of tissue distribution, synthesized by the fat body and secreted into the hemolymph.

The protein localises to the secreted. In terms of biological role, acute phase protein with antibacterial activity against the Gram-negative bacteria E.coli (MIC=6.25 ug/ml) and S.sonnei (MIC=12.5 ug/ml). Lacks antibacterial activity against the Gram-negative bacteria P.vulgaris, P.rettgeri and P.aeruginosa, and against the Gram-positive bacteria B.subtilis, S.aureus, M.luteus, B.megaterium, C.bovis and E.cloacae. The sequence is that of Diptericin from Sarcophaga peregrina (Flesh fly).